The primary structure comprises 432 residues: Gamma-glutamyl phosphate reductase (432 aa).

It belongs to the gamma-glutamyl phosphate reductase family.

It is found in the cytoplasm. It carries out the reaction L-glutamate 5-semialdehyde + phosphate + NADP(+) = L-glutamyl 5-phosphate + NADPH + H(+). It functions in the pathway amino-acid biosynthesis; L-proline biosynthesis; L-glutamate 5-semialdehyde from L-glutamate: step 2/2. Its function is as follows. Catalyzes the NADPH-dependent reduction of L-glutamate 5-phosphate into L-glutamate 5-semialdehyde and phosphate. The product spontaneously undergoes cyclization to form 1-pyrroline-5-carboxylate. This Psychrobacter sp. (strain PRwf-1) protein is Gamma-glutamyl phosphate reductase.